A 633-amino-acid polypeptide reads, in one-letter code: CDK5 and ABL1 enzyme substrate 1 (633 aa).

Positions M1 to Q29 are enriched in low complexity. A disordered region spans residues M1–G99. The interval M1–S109 is interaction with TDRD7. The span at P51–R61 shows a compositional bias: basic and acidic residues. S168 and S287 each carry phosphoserine. Positions Q179–S492 are interaction with CDK3. Residue S313 is modified to Phosphoserine; by CDK2 and CDK3. Phosphothreonine is present on T415.

Belongs to the cyclin family. In terms of assembly, found in a complex with p53/TP53. Found in a number of complexes with CDK2, CDK3, CDK5, ABL1, TDRD7, CDK17, CCNA1, CCNE1 and TP73. Interacts with CDK2, CDK3, CDK5, ABL1 and TDRD7. Phosphorylated on Ser-313 by CCNE1/CDK3. Phosphorylated on serine/threonine residues by CDK5 and on tyrosine residues by ABL1. Also phosphorylated in vitro by CCNA1/CDK2, CCNE1/CDK2, CCNA1/CDK3 and CCNE1/CDK3. Expressed in breast, pancreas, colon, head and neck (at protein level). Strongly decreased in more than half of cases of atypical endometrial hyperplasia and in more than 90% of endometrial cancers.

The protein localises to the nucleus. It localises to the cytoplasm. Functionally, cyclin-dependent kinase binding protein. Enhances cyclin-dependent kinase tyrosine phosphorylation by nonreceptor tyrosine kinases, such as that of CDK5 by activated ABL1, which leads to increased CDK5 activity and is critical for neuronal development, and that of CDK2 by WEE1, which leads to decreased CDK2 activity and growth inhibition. Positively affects neuronal outgrowth. Plays a role as a regulator for p53/p73-induced cell death. The chain is CDK5 and ABL1 enzyme substrate 1 (CABLES1) from Homo sapiens (Human).